A 701-amino-acid chain; its full sequence is Polyribonucleotide nucleotidyltransferase (701 aa).

Asp-487 and Asp-493 together coordinate Mg(2+). One can recognise a KH domain in the interval Pro-554–Ile-613. The 69-residue stretch at Gly-623–Lys-691 folds into the S1 motif domain.

Belongs to the polyribonucleotide nucleotidyltransferase family. In terms of assembly, component of the RNA degradosome, which is a multiprotein complex involved in RNA processing and mRNA degradation. It depends on Mg(2+) as a cofactor.

It localises to the cytoplasm. It carries out the reaction RNA(n+1) + phosphate = RNA(n) + a ribonucleoside 5'-diphosphate. In terms of biological role, involved in mRNA degradation. Catalyzes the phosphorolysis of single-stranded polyribonucleotides processively in the 3'- to 5'-direction. The polypeptide is Polyribonucleotide nucleotidyltransferase (Pseudomonas putida (strain GB-1)).